We begin with the raw amino-acid sequence, 90 residues long: Inactive casein kinase II subunit alpha-2 (90 aa).

ATP contacts are provided by residues 40-48 (VGRGKYSEV) and Lys63.

The protein belongs to the protein kinase superfamily. Ser/Thr protein kinase family. CK2 subfamily.

Its function is as follows. The Nipponbare allele of HD6 contains a premature stop codon, resulting in a truncated non-functional product. The sequence is that of Inactive casein kinase II subunit alpha-2 from Oryza sativa subsp. japonica (Rice).